A 434-amino-acid polypeptide reads, in one-letter code: Trigger factor (434 aa).

The 86-residue stretch at 161-246 (EDRATLDFTG…LKKVEVRELP (86 aa)) folds into the PPIase FKBP-type domain.

This sequence belongs to the FKBP-type PPIase family. Tig subfamily.

The protein resides in the cytoplasm. It carries out the reaction [protein]-peptidylproline (omega=180) = [protein]-peptidylproline (omega=0). Its function is as follows. Involved in protein export. Acts as a chaperone by maintaining the newly synthesized protein in an open conformation. Functions as a peptidyl-prolyl cis-trans isomerase. The polypeptide is Trigger factor (Yersinia enterocolitica serotype O:8 / biotype 1B (strain NCTC 13174 / 8081)).